Here is a 750-residue protein sequence, read N- to C-terminus: Ribosomal RNA large subunit methyltransferase K/L (750 aa).

A THUMP domain is found at 46 to 157 (TAYRLCLWSR…RGEAILSLDL (112 aa)).

Belongs to the methyltransferase superfamily. RlmKL family.

The protein resides in the cytoplasm. The catalysed reaction is guanosine(2445) in 23S rRNA + S-adenosyl-L-methionine = N(2)-methylguanosine(2445) in 23S rRNA + S-adenosyl-L-homocysteine + H(+). The enzyme catalyses guanosine(2069) in 23S rRNA + S-adenosyl-L-methionine = N(2)-methylguanosine(2069) in 23S rRNA + S-adenosyl-L-homocysteine + H(+). Its function is as follows. Specifically methylates the guanine in position 2445 (m2G2445) and the guanine in position 2069 (m7G2069) of 23S rRNA. The sequence is that of Ribosomal RNA large subunit methyltransferase K/L from Pseudomonas syringae pv. tomato (strain ATCC BAA-871 / DC3000).